A 90-amino-acid chain; its full sequence is Signal recognition particle 19 kDa protein (90 aa).

This sequence belongs to the SRP19 family. As to quaternary structure, part of the signal recognition particle protein translocation system, which is composed of SRP and FtsY. Archaeal SRP consists of a 7S RNA molecule of 300 nucleotides and two protein subunits: SRP54 and SRP19.

It localises to the cytoplasm. Involved in targeting and insertion of nascent membrane proteins into the cytoplasmic membrane. Binds directly to 7S RNA and mediates binding of the 54 kDa subunit of the SRP. In Methanococcus aeolicus (strain ATCC BAA-1280 / DSM 17508 / OCM 812 / Nankai-3), this protein is Signal recognition particle 19 kDa protein.